The primary structure comprises 302 residues: Polyamine aminopropyltransferase (302 aa).

A PABS domain is found at 4 to 239 (WTWHLEWQTP…GLWGFIYASD (236 aa)). Position 33 (Gln-33) interacts with S-methyl-5'-thioadenosine. His-64 and Glu-88 together coordinate spermidine. Residues Asp-108 and 140-141 (DG) each bind S-methyl-5'-thioadenosine. Residue Asp-158 is the Proton acceptor of the active site. Pro-167 contributes to the S-methyl-5'-thioadenosine binding site.

The protein belongs to the spermidine/spermine synthase family. Homodimer or homotetramer.

It is found in the cytoplasm. The catalysed reaction is S-adenosyl 3-(methylsulfanyl)propylamine + putrescine = S-methyl-5'-thioadenosine + spermidine + H(+). The protein operates within amine and polyamine biosynthesis; spermidine biosynthesis; spermidine from putrescine: step 1/1. Functionally, catalyzes the irreversible transfer of a propylamine group from the amino donor S-adenosylmethioninamine (decarboxy-AdoMet) to putrescine (1,4-diaminobutane) to yield spermidine. This is Polyamine aminopropyltransferase from Sulfolobus acidocaldarius (strain ATCC 33909 / DSM 639 / JCM 8929 / NBRC 15157 / NCIMB 11770).